The sequence spans 716 residues: Fusoxypene synthase (716 aa).

Positions 4 to 328 (LSYQSRLIPP…WLSACSRQNT (325 aa)) are sesterterpenoid synthase. A Mg(2+)-binding site is contributed by aspartate 96. A substrate-binding site is contributed by aspartate 96. The segment at 187–190 (RMTN) is substrate. Asparagine 231 contributes to the substrate binding site. The interval 235-239 (SYERE) is substrate. The geranylfarnesyl diphosphate synthase stretch occupies residues 329-711 (WKTNCSIDGK…CLATLSMEGC (383 aa)). Lysine 422, arginine 425, and histidine 454 together coordinate isopentenyl diphosphate. 2 residues coordinate Mg(2+): aspartate 461 and aspartate 465. Residue arginine 470 participates in dimethylallyl diphosphate binding. Position 471 (arginine 471) interacts with isopentenyl diphosphate. Dimethylallyl diphosphate contacts are provided by lysine 548, threonine 549, glutamine 587, asparagine 594, and lysine 602.

The protein in the N-terminal section; belongs to the terpene synthase family. In the C-terminal section; belongs to the FPP/GGPP synthase family.

The catalysed reaction is 4 isopentenyl diphosphate + dimethylallyl diphosphate = (2E,6E,10E,14E)-geranylfarnesyl diphosphate + 4 diphosphate. The enzyme catalyses (2E,6E,10E,14E)-geranylfarnesyl diphosphate = fusoxypene A + diphosphate. It carries out the reaction (2E,6E,10E,14E)-geranylfarnesyl diphosphate = fusoxypene B + diphosphate. It catalyses the reaction (2E,6E,10E,14E)-geranylfarnesyl diphosphate = fusoxypene C + diphosphate. The catalysed reaction is (2E,6E,10E,14E)-geranylfarnesyl diphosphate = (-)-astellatene + diphosphate. Functionally, bifunctional sesterterpenoid synthase that performs both prenyl transferase and terpene cyclase activity, converting isopentenyl diphosphate and dimethylallyl diphosphate into geranylfarnesyl diphosphate (GFPP) and then converting GFPP into the enantiomeric sesterterpenes with a 5-6-7-3-5 ring system fusoxypene A, fusoxypene B, fusoxypene C and (-)-astellatene. The chain is Fusoxypene synthase from Fusarium oxysporum (Fusarium vascular wilt).